The sequence spans 241 residues: ATP synthase subunit a (241 aa).

The next 5 helical transmembrane spans lie at 30–50, 91–111, 128–148, 193–213, and 214–234; these read GQVF…VVVG, FIGT…LVPW, INTT…AGLS, LVVA…VMFL, and GLFT…YYIG.

It belongs to the ATPase A chain family. F-type ATPases have 2 components, CF(1) - the catalytic core - and CF(0) - the membrane proton channel. CF(1) has five subunits: alpha(3), beta(3), gamma(1), delta(1), epsilon(1). CF(0) has four main subunits: a, b, b' and c.

It is found in the cellular thylakoid membrane. In terms of biological role, key component of the proton channel; it plays a direct role in the translocation of protons across the membrane. In Prochlorococcus marinus (strain MIT 9313), this protein is ATP synthase subunit a.